A 323-amino-acid polypeptide reads, in one-letter code: Fructokinase-1 (323 aa).

Belongs to the carbohydrate kinase PfkB family. In terms of tissue distribution, expressed in root, endosperm and leaf tissues.

The enzyme catalyses D-fructose + ATP = D-fructose 6-phosphate + ADP + H(+). It participates in glycan biosynthesis; starch biosynthesis. Completely inhibited at 50 mM ATP, but not inhibited at high fructose concentration. In terms of biological role, fructokinase that may play an important role in maintaining the flux of carbon towards starch formation. May also be involved in a sugar-sensing pathway. This Oryza sativa subsp. japonica (Rice) protein is Fructokinase-1.